A 33-amino-acid polypeptide reads, in one-letter code: U13-ctenitoxin-Pn1c (33 aa).

Intrachain disulfides connect C3-C17, C10-C21, and C16-C30.

Expressed by the venom gland.

It localises to the secreted. Functionally, acts as a neurotoxin. This chain is U13-ctenitoxin-Pn1c, found in Phoneutria nigriventer (Brazilian armed spider).